A 247-amino-acid chain; its full sequence is Protein ABHD14A (247 aa).

Residues 11–31 (AALLGLGLLLVFLLYMGLPGP) form a helical; Signal-anchor for type II membrane protein membrane-spanning segment. A glycan (N-linked (GlcNAc...) asparagine) is linked at Asn43. Catalysis depends on charge relay system residues Ser147, Asp198, and His225.

This sequence belongs to the AB hydrolase superfamily. ABHD14 family. In terms of tissue distribution, widely expressed. Higher expression is detected in brain, kidney, heart, testis, ovary and uterus.

It localises to the cytoplasm. The protein resides in the membrane. Functionally, possible role in granule neuron development. The polypeptide is Protein ABHD14A (Mus musculus (Mouse)).